Consider the following 37-residue polypeptide: Cytochrome b6-f complex subunit 5 (37 aa).

Residues 5 to 25 (LLDGLVLGLVFATLGGLFYAA) form a helical membrane-spanning segment.

Belongs to the PetG family. As to quaternary structure, the 4 large subunits of the cytochrome b6-f complex are cytochrome b6, subunit IV (17 kDa polypeptide, PetD), cytochrome f and the Rieske protein, while the 4 small subunits are PetG, PetL, PetM and PetN. The complex functions as a dimer.

Its subcellular location is the cellular thylakoid membrane. Its function is as follows. Component of the cytochrome b6-f complex, which mediates electron transfer between photosystem II (PSII) and photosystem I (PSI), cyclic electron flow around PSI, and state transitions. PetG is required for either the stability or assembly of the cytochrome b6-f complex. The protein is Cytochrome b6-f complex subunit 5 of Mastigocladus laminosus (Fischerella sp.).